The primary structure comprises 777 residues: Glucocorticoid receptor (777 aa).

The span at Met1–Asn14 shows a compositional bias: basic and acidic residues. Residues Met1–Glu22 form a disordered region. Residues Met1–Leu420 form a modulating region. Thr8 is subject to Phosphothreonine. Residue Arg23 is modified to Omega-N-methylarginine. Phosphoserine is present on residues Ser45, Ser113, Ser134, and Ser141. The segment at Asn130–Lys182 is disordered. Positions Ser134–Ala150 are enriched in low complexity. Over residues Pro151–Val163 the composition is skewed to basic and acidic residues. A compositionally biased stretch (polar residues) spans Ser164–Thr174. Phosphoserine occurs at positions 203, 211, and 226. Lys258 is covalently cross-linked (Glycyl lysine isopeptide (Lys-Gly) (interchain with G-Cter in SUMO2)). Phosphoserine is present on Ser267. Residues Lys277 and Lys293 each participate in a glycyl lysine isopeptide (Lys-Gly) (interchain with G-Cter in SUMO); alternate cross-link. Residues Lys277 and Lys293 each participate in a glycyl lysine isopeptide (Lys-Gly) (interchain with G-Cter in SUMO2); alternate cross-link. The span at Ser394–Thr414 shows a compositional bias: low complexity. The segment at Ser394–Gly415 is disordered. Ser404 is subject to Phosphoserine. Lys419 is covalently cross-linked (Glycyl lysine isopeptide (Lys-Gly) (interchain with G-Cter in ubiquitin)). NR C4-type zinc fingers lie at residues Cys421–Cys441 and Cys457–Cys481. Positions Cys421–Met486 form a DNA-binding region, nuclear receptor. N6-acetyllysine is present on residues Lys480, Lys492, Lys494, and Lys495. The segment at Gly485–Lys777 is interaction with CLOCK. The tract at residues Asn487–Ala523 is hinge. The region spanning Thr524–Thr758 is the NR LBD domain. An interaction with CRY1 region spans residues Leu532–Leu697. Lys703 is covalently cross-linked (Glycyl lysine isopeptide (Lys-Gly) (interchain with G-Cter in SUMO)).

The protein belongs to the nuclear hormone receptor family. NR3 subfamily. In terms of assembly, heteromultimeric cytoplasmic complex with HSP90AA1, HSPA1A/HSPA1B, and FKBP5 or another immunophilin such as PPID, STIP1, or the immunophilin homolog PPP5C. Upon ligand binding FKBP5 dissociates from the complex and FKBP4 takes its place, thereby linking the complex to dynein and mediating transport to the nucleus, where the complex dissociates. Probably forms a complex composed of chaperones HSP90 and HSP70, co-chaperones CDC37, PPP5C, TSC1 and client protein TSC2, CDK4, AKT, RAF1 and NR3C1; this complex does not contain co-chaperones STIP1/HOP and PTGES3/p23. Directly interacts with UNC45A. Binds to DNA as a homodimer, and as heterodimer with NR3C2 or the retinoid X receptor. Binds STAT5A and STAT5B homodimers and heterodimers. Interacts with NRIP1, POU2F1, POU2F2 and TRIM28. Interacts with several coactivator complexes, including the SMARCA4 complex, CREBBP/EP300, TADA2L (Ada complex) and p160 coactivators such as NCOA2 and NCOA6. Interaction with BAG1 inhibits transactivation. Interacts with HEXIM1 and TGFB1I1. Interacts with NCOA1. Interacts with NCOA3, SMARCA4, SMARCC1, SMARCD1, and SMARCE1. Interacts with CLOCK, CRY1 and CRY2 in a ligand-dependent fashion. Interacts with CIART. Interacts with RWDD3. Interacts with UBE2I/UBC9 and this interaction is enhanced in the presence of RWDD3. Interacts with GRIP1. Interacts with NR4A3 (via nuclear receptor DNA-binding domain), represses transcription activity of NR4A3 on the POMC promoter Nur response element (NurRE). Directly interacts with PNRC2 to attract and form a complex with UPF1 and DCP1A; the interaction leads to rapid mRNA degradation. Interacts with GSK3B. Interacts with FNIP1 and FNIP2. Interacts (via C-terminus) with HNRNPU (via C-terminus). Interacts with MCM3AP. Interacts (via domain NR LBD) with HSP90AA1 and HSP90AB1. In the absence of hormonal ligand, interacts with TACC1. Interacts (via NR LBD domain) with ZNF764 (via KRAB domain); the interaction regulates transcription factor activity of NR3C1 by directing its actions toward certain biologic pathways. Post-translationally, acetylation by CLOCK reduces its binding to glucocorticoid response elements and its transcriptional activity. Increased proteasome-mediated degradation in response to glucocorticoids. In terms of processing, phosphorylated in the absence of hormone; becomes hyperphosphorylated in the presence of glucocorticoid. The Ser-203, Ser-226 and Ser-404-phosphorylated forms are mainly cytoplasmic, and the Ser-211-phosphorylated form is nuclear. Phosphorylation at Ser-211 increases transcriptional activity. Phosphorylation at Ser-203, Ser-226 and Ser-404 decreases signaling capacity. Phosphorylation at Ser-404 may protect from glucocorticoid-induced apoptosis. Phosphorylation at Ser-203 and Ser-211 is not required in regulation of chromosome segregation. May be dephosphorylated by PPP5C, attenuates NR3C1 action. Post-translationally, ubiquitinated by UBR5, leading to its degradation: UBR5 specifically recognizes and binds ligand-bound NR3C1 when it is not associated with coactivators (NCOAs). In presence of NCOAs, the UBR5-degron is not accessible, preventing its ubiquitination and degradation. Sumoylation at Lys-277 and Lys-293 negatively regulates its transcriptional activity. Sumoylation at Lys-703 positively regulates its transcriptional activity in the presence of RWDD3. Sumoylation at Lys-277 and Lys-293 is dispensable whereas sumoylation at Lys-703 is critical for the stimulatory effect of RWDD3 on its transcriptional activity. Heat shock increases sumoylation in a RWDD3-dependent manner.

Its subcellular location is the cytoplasm. The protein localises to the nucleus. The protein resides in the mitochondrion. It is found in the cytoskeleton. It localises to the spindle. Its subcellular location is the microtubule organizing center. The protein localises to the centrosome. The protein resides in the chromosome. It is found in the nucleoplasm. Receptor for glucocorticoids (GC). Has a dual mode of action: as a transcription factor that binds to glucocorticoid response elements (GRE), both for nuclear and mitochondrial DNA, and as a modulator of other transcription factors. Affects inflammatory responses, cellular proliferation and differentiation in target tissues. Involved in chromatin remodeling. Plays a role in rapid mRNA degradation by binding to the 5' UTR of target mRNAs and interacting with PNRC2 in a ligand-dependent manner which recruits the RNA helicase UPF1 and the mRNA-decapping enzyme DCP1A, leading to RNA decay. Could act as a coactivator for STAT5-dependent transcription upon growth hormone (GH) stimulation and could reveal an essential role of hepatic GR in the control of body growth. Mediates glucocorticoid-induced apoptosis. Promotes accurate chromosome segregation during mitosis. May act as a tumor suppressor. May play a negative role in adipogenesis through the regulation of lipolytic and antilipogenic gene expression. In Saimiri boliviensis boliviensis (Bolivian squirrel monkey), this protein is Glucocorticoid receptor (NR3C1).